We begin with the raw amino-acid sequence, 209 residues long: Chaperone protein TorD (209 aa).

This sequence belongs to the TorD/DmsD family. TorD subfamily.

It localises to the cytoplasm. Involved in the biogenesis of TorA. Acts on TorA before the insertion of the molybdenum cofactor and, as a result, probably favors a conformation of the apoenzyme that is competent for acquiring the cofactor. In Shewanella baltica (strain OS155 / ATCC BAA-1091), this protein is Chaperone protein TorD.